The primary structure comprises 499 residues: Putative sperm motility kinase W (499 aa).

A Protein kinase domain is found at 14-262 (YKVLFTLGHG…IEDIERHPWV (249 aa)). Residues 20 to 28 (LGHGSFGTV) and Lys43 contribute to the ATP site. Asp133 acts as the Proton acceptor in catalysis. Residues 274-314 (DPDYNIIEMLCGMGFDANEILESLQRKKYNESMGAYLILKA) form the UBA domain.

It belongs to the protein kinase superfamily. CAMK Ser/Thr protein kinase family. Smok subfamily.

The enzyme catalyses L-seryl-[protein] + ATP = O-phospho-L-seryl-[protein] + ADP + H(+). The catalysed reaction is L-threonyl-[protein] + ATP = O-phospho-L-threonyl-[protein] + ADP + H(+). Its function is as follows. May play a role in sperm motility, especially in the regulation of flagellar function. The chain is Putative sperm motility kinase W from Mus musculus (Mouse).